Here is a 553-residue protein sequence, read N- to C-terminus: Meiotic expression up-regulated protein 18 (553 aa).

A disordered region spans residues 267–305 (SNETLCSNDSKHRIARLKNEDNTQKPISKKRKSKKASHK). Positions 275–289 (DSKHRIARLKNEDNT) are enriched in basic and acidic residues. A compositionally biased stretch (basic residues) spans 293 to 304 (ISKKRKSKKASH).

This is Meiotic expression up-regulated protein 18 (meu18) from Schizosaccharomyces pombe (strain 972 / ATCC 24843) (Fission yeast).